A 250-amino-acid polypeptide reads, in one-letter code: uncharacterized protein (250 aa).

The signal sequence occupies residues 1-25 (MKTLRTLCVLMILSGVIFFGLKIDA).

This is an uncharacterized protein from Bacillus subtilis (strain 168).